The chain runs to 294 residues: Cytidine deaminase (294 aa).

CMP/dCMP-type deaminase domains lie at 48 to 168 (NDDE…FGPK) and 187 to 294 (DNTS…RVTL). Substrate is bound at residue 89–91 (NME). A Zn(2+)-binding site is contributed by histidine 102. Residue glutamate 104 is the Proton donor of the active site. Zn(2+) is bound by residues cysteine 129 and cysteine 132.

This sequence belongs to the cytidine and deoxycytidylate deaminase family. In terms of assembly, homodimer. Zn(2+) is required as a cofactor.

The enzyme catalyses cytidine + H2O + H(+) = uridine + NH4(+). The catalysed reaction is 2'-deoxycytidine + H2O + H(+) = 2'-deoxyuridine + NH4(+). This enzyme scavenges exogenous and endogenous cytidine and 2'-deoxycytidine for UMP synthesis. In Proteus mirabilis (strain HI4320), this protein is Cytidine deaminase.